The following is a 147-amino-acid chain: Small ribosomal subunit protein eS19 (147 aa).

This sequence belongs to the eukaryotic ribosomal protein eS19 family. As to quaternary structure, component of the small ribosomal subunit.

It is found in the cytoplasm. The protein resides in the nucleus. Component of the small ribosomal subunit. The ribosome is a large ribonucleoprotein complex responsible for the synthesis of proteins in the cell. Required for pre-rRNA processing and maturation of 40S ribosomal subunits. The sequence is that of Small ribosomal subunit protein eS19 (rps19) from Gillichthys mirabilis (Long-jawed mudsucker).